The following is a 165-amino-acid chain: Protein SprT (165 aa).

Residues 20–163 (EKLAQANLKL…RCVHCGEQLV (144 aa)) form the SprT-like domain. Position 78 (His-78) interacts with Zn(2+). Glu-79 is an active-site residue. Residue His-82 participates in Zn(2+) binding.

It belongs to the SprT family. Requires Zn(2+) as cofactor.

It localises to the cytoplasm. The sequence is that of Protein SprT from Escherichia coli O127:H6 (strain E2348/69 / EPEC).